A 147-amino-acid polypeptide reads, in one-letter code: Transthyretin (147 aa).

Residues Met1 to Ala20 form the signal peptide. Sulfocysteine is present on Cys30. Residue Lys35 participates in L-thyroxine binding. Glu62 carries the 4-carboxyglutamate modification. Ser72 carries the post-translational modification Phosphoserine. Glu74 serves as a coordination point for L-thyroxine. The N-linked (GlcNAc...) asparagine glycan is linked to Asn118. Position 137 (Ser137) interacts with L-thyroxine.

This sequence belongs to the transthyretin family. In terms of assembly, homotetramer. Dimer of dimers. In the homotetramer, subunits assemble around a central channel that can accommodate two ligand molecules. Interacts with RBP4. Post-translationally, sulfonation of the reactive cysteine Cys-30 enhances the stability of the native conformation of TTR, avoiding misassembly of the protein leading to amyloid formation. Detected in plasma (at protein level). Detected in liver.

The protein resides in the secreted. Functionally, thyroid hormone-binding protein. Probably transports thyroxine from the bloodstream to the brain. The sequence is that of Transthyretin (Ttr) from Mus musculus (Mouse).